Here is a 336-residue protein sequence, read N- to C-terminus: Dihydroorotate dehydrogenase (quinone) (336 aa).

FMN-binding positions include 62 to 66 and threonine 86; that span reads AGLDK. Lysine 66 provides a ligand contact to substrate. 111–115 contributes to the substrate binding site; the sequence is NRMGF. FMN contacts are provided by asparagine 139 and asparagine 172. Asparagine 172 is a substrate binding site. The active-site Nucleophile is the serine 175. Residue asparagine 177 coordinates substrate. Lysine 217 and threonine 245 together coordinate FMN. Position 246–247 (246–247) interacts with substrate; that stretch reads NT. FMN-binding positions include glycine 268, glycine 297, and 318 to 319; that span reads YS.

This sequence belongs to the dihydroorotate dehydrogenase family. Type 2 subfamily. Monomer. The cofactor is FMN.

The protein localises to the cell membrane. The catalysed reaction is (S)-dihydroorotate + a quinone = orotate + a quinol. The protein operates within pyrimidine metabolism; UMP biosynthesis via de novo pathway; orotate from (S)-dihydroorotate (quinone route): step 1/1. Catalyzes the conversion of dihydroorotate to orotate with quinone as electron acceptor. The polypeptide is Dihydroorotate dehydrogenase (quinone) (Pectobacterium carotovorum subsp. carotovorum (strain PC1)).